The sequence spans 465 residues: UPF0324 membrane protein CC_0425 (465 aa).

The interval 97–132 is disordered; that stretch reads HRQPDRAPPARASEQPLRQGRRALRRRPDQRRHRPR. The span at 115 to 132 shows a compositional bias: basic residues; that stretch reads QGRRALRRRPDQRRHRPR. 10 helical membrane-spanning segments follow: residues 135–157, 172–194, 219–241, 251–273, 286–308, 318–340, 352–374, 378–400, 405–427, and 442–464; these read AAAL…LMAV, LLAV…GAGL, AALG…GIGA, LAEA…LAAS, TALV…PPIA, AGVF…ASVS, LSRI…RTAQ, ISGL…ARGL, PALV…GAIS, and LAIL…TRIF.

It belongs to the UPF0324 family.

It localises to the cell membrane. This chain is UPF0324 membrane protein CC_0425, found in Caulobacter vibrioides (strain ATCC 19089 / CIP 103742 / CB 15) (Caulobacter crescentus).